Consider the following 304-residue polypeptide: Sulfate adenylyltransferase subunit 2 (304 aa).

This sequence belongs to the PAPS reductase family. CysD subfamily. As to quaternary structure, heterodimer composed of CysD, the smaller subunit, and CysNC.

It carries out the reaction sulfate + ATP + H(+) = adenosine 5'-phosphosulfate + diphosphate. It participates in sulfur metabolism; hydrogen sulfide biosynthesis; sulfite from sulfate: step 1/3. Functionally, with CysN forms the ATP sulfurylase (ATPS) that catalyzes the adenylation of sulfate producing adenosine 5'-phosphosulfate (APS) and diphosphate, the first enzymatic step in sulfur assimilation pathway. APS synthesis involves the formation of a high-energy phosphoric-sulfuric acid anhydride bond driven by GTP hydrolysis by CysN coupled to ATP hydrolysis by CysD. The sequence is that of Sulfate adenylyltransferase subunit 2 from Xylella fastidiosa (strain 9a5c).